The following is a 1337-amino-acid chain: Nucleoporin POM152 (1337 aa).

Residues 1–48 form a disordered region; it reads MEHRYNVFNDTPRGNHWMGSSVSGSPRPSYSSRPNVNTTRRFQYSDDE. Topologically, residues 1–110 are cytoplasmic; the sequence is MEHRYNVFND…TDVLEISKQR (110 aa). A pore side region spans residues 1–175; sequence MEHRYNVFND…SFNIPRLTFK (175 aa). Positions 19-37 are enriched in low complexity; sequence GSSVSGSPRPSYSSRPNVN. Residues Ser45 and Ser60 each carry the phosphoserine modification. Residues 111 to 131 form a helical membrane-spanning segment; that stretch reads TFAVILFLIIQCYKIYDLVIL. Residues 132–148 lie on the Perinuclear space side of the membrane; it reads KSGLPLSGLLFKNYRFN. The helical transmembrane segment at 149-169 threads the bilayer; that stretch reads FISKYFIIDSFFLYVLPSFNI. Residues 170-172 lie on the Cytoplasmic side of the membrane; it reads PRL. Residues 173–193 form a helical membrane-spanning segment; it reads TFKPWVVYLQILAMLLLNIFI. The Perinuclear space portion of the chain corresponds to 194–1337; sequence SSDHEFVLIS…FAKNDLFFNN (1144 aa). A cisternal side region spans residues 196–1337; that stretch reads DHEFVLISLI…FAKNDLFFNN (1142 aa). Residue Asn280 is glycosylated (N-linked (GlcNAc...) asparagine). Repeat copies occupy residues 390–413, 626–650, 732–755, 836–859, 943–966, 1058–1077, 1157–1178, and 1253–1276. The tract at residues 390 to 1276 is 8 X 24 AA approximate repeats; the sequence is DRCIGDSDNV…EGTPPFSLTY (887 aa).

Component of the nuclear pore complex (NPC). NPC constitutes the exclusive means of nucleocytoplasmic transport. NPCs allow the passive diffusion of ions and small molecules and the active, nuclear transport receptor-mediated bidirectional transport of macromolecules such as proteins, RNAs, ribonucleoparticles (RNPs), and ribosomal subunits across the nuclear envelope. Due to its 8-fold rotational symmetry, all subunits are present with 8 copies or multiples thereof. Interacts with NUP188. The N-terminus is blocked. Post-translationally, phosphorylated by CDC28.

The protein localises to the nucleus. Its subcellular location is the nuclear pore complex. It localises to the nucleus membrane. Functions as a component of the nuclear pore complex (NPC). NPC components, collectively referred to as nucleoporins (NUPs), can play the role of both NPC structural components and of docking or interaction partners for transiently associated nuclear transport factors. POM152 is important for the de novo assembly of NPCs. In Saccharomyces cerevisiae (strain ATCC 204508 / S288c) (Baker's yeast), this protein is Nucleoporin POM152 (POM152).